A 163-amino-acid polypeptide reads, in one-letter code: Neurotrophin-3 (163 aa).

Residues Ile-1–Ser-3 form the signal peptide. The propeptide occupies Thr-4–Arg-119. Asn-112 is a glycosylation site (N-linked (GlcNAc...) asparagine). The disordered stretch occupies residues Thr-114–Ser-133. The segment covering Ser-123–Ser-133 has biased composition (basic and acidic residues).

Belongs to the NGF-beta family.

The protein resides in the secreted. Seems to promote the survival of visceral and proprioceptive sensory neurons. The sequence is that of Neurotrophin-3 (NTF3) from Lichanura trivirgata (Rosy boa).